A 379-amino-acid chain; its full sequence is Cytochrome b (379 aa).

The next 4 membrane-spanning stretches (helical) occupy residues 33–53 (FGSL…FLAM), 77–98 (WLIR…FIHV), 113–133 (WNIG…GYVL), and 178–198 (FFAF…VHLL). Heme b is bound by residues H83 and H97. Residues H182 and H196 each coordinate heme b. H201 lines the a ubiquinone pocket. A run of 4 helical transmembrane segments spans residues 226 to 246 (IKDL…ALFF), 288 to 308 (LGGV…PLLN), 320 to 340 (VTQT…WIGG), and 347 to 367 (FTTI…ILIP).

It belongs to the cytochrome b family. In terms of assembly, the cytochrome bc1 complex contains 11 subunits: 3 respiratory subunits (MT-CYB, CYC1 and UQCRFS1), 2 core proteins (UQCRC1 and UQCRC2) and 6 low-molecular weight proteins (UQCRH/QCR6, UQCRB/QCR7, UQCRQ/QCR8, UQCR10/QCR9, UQCR11/QCR10 and a cleavage product of UQCRFS1). This cytochrome bc1 complex then forms a dimer. Requires heme b as cofactor.

It is found in the mitochondrion inner membrane. In terms of biological role, component of the ubiquinol-cytochrome c reductase complex (complex III or cytochrome b-c1 complex) that is part of the mitochondrial respiratory chain. The b-c1 complex mediates electron transfer from ubiquinol to cytochrome c. Contributes to the generation of a proton gradient across the mitochondrial membrane that is then used for ATP synthesis. The chain is Cytochrome b (MT-CYB) from Akodon lindberghi (Lindbergh's grass mouse).